The primary structure comprises 602 residues: Elongation factor 4 (602 aa).

The 183-residue stretch at 7–189 (SRIRNFCIIA…AVVDRVPAPA (183 aa)) folds into the tr-type G domain. GTP-binding positions include 19–24 (DHGKST) and 136–139 (NKID).

The protein belongs to the TRAFAC class translation factor GTPase superfamily. Classic translation factor GTPase family. LepA subfamily.

The protein resides in the cell inner membrane. The enzyme catalyses GTP + H2O = GDP + phosphate + H(+). Required for accurate and efficient protein synthesis under certain stress conditions. May act as a fidelity factor of the translation reaction, by catalyzing a one-codon backward translocation of tRNAs on improperly translocated ribosomes. Back-translocation proceeds from a post-translocation (POST) complex to a pre-translocation (PRE) complex, thus giving elongation factor G a second chance to translocate the tRNAs correctly. Binds to ribosomes in a GTP-dependent manner. The chain is Elongation factor 4 from Synechococcus sp. (strain CC9902).